Reading from the N-terminus, the 596-residue chain is Succinate dehydrogenase flavoprotein subunit (596 aa).

Residues 18–23 (GAGGAG), 41–56 (TKLFPTRSHTVAAQGG), and Asp225 contribute to the FAD site. His49 carries the post-translational modification Tele-8alpha-FAD histidine. Substrate-binding residues include His246 and Thr258. The Proton acceptor role is filled by Arg290. Residue His357 coordinates substrate. An FAD-binding site is contributed by Glu391. Arg402 lines the substrate pocket. An FAD-binding site is contributed by 407 to 408 (SL).

The protein belongs to the FAD-dependent oxidoreductase 2 family. FRD/SDH subfamily. Part of an enzyme complex containing four subunits: a flavoprotein, an iron-sulfur, cytochrome b-556, and a hydrophobic anchor protein. The cofactor is FAD.

The protein localises to the cell inner membrane. The catalysed reaction is a quinone + succinate = fumarate + a quinol. It functions in the pathway carbohydrate metabolism; tricarboxylic acid cycle; fumarate from succinate (bacterial route): step 1/1. This is Succinate dehydrogenase flavoprotein subunit (sdhA) from Rickettsia felis (strain ATCC VR-1525 / URRWXCal2) (Rickettsia azadi).